Consider the following 237-residue polypeptide: UPF0053 protein HI_0056 (237 aa).

The next 7 helical transmembrane spans lie at 12-32, 49-69, 90-110, 126-146, 151-171, 188-208, and 210-230; these read ISLVTLAALEIVLGIDNIIFI, ILGLALAMLTRILLLMSLAWI, ILLIGGLFLIIKSSGEIKEAI, YLGVLIQIAVLDIVFSLDSVI, MASHLPVMILAIMIAVGVMMF, ILALAFLVLVGISLIAESLDI, and IPKGYIYFAMGFSVVVEMINI.

This sequence belongs to the UPF0053 family.

Its subcellular location is the cell membrane. The chain is UPF0053 protein HI_0056 from Haemophilus influenzae (strain ATCC 51907 / DSM 11121 / KW20 / Rd).